A 265-amino-acid chain; its full sequence is NAD kinase 1 (265 aa).

Catalysis depends on D45, which acts as the Proton acceptor. Residues 45-46 (DG), 122-123 (NE), R148, D150, and A185 each bind NAD(+).

This sequence belongs to the NAD kinase family. A divalent metal cation serves as cofactor.

Its subcellular location is the cytoplasm. The enzyme catalyses NAD(+) + ATP = ADP + NADP(+) + H(+). In terms of biological role, involved in the regulation of the intracellular balance of NAD and NADP, and is a key enzyme in the biosynthesis of NADP. Catalyzes specifically the phosphorylation on 2'-hydroxyl of the adenosine moiety of NAD to yield NADP. The polypeptide is NAD kinase 1 (Bacillus cereus (strain ATCC 10987 / NRS 248)).